The following is a 245-amino-acid chain: Small ribosomal subunit protein uS2 (245 aa).

It belongs to the universal ribosomal protein uS2 family.

This Dehalococcoides mccartyi (strain ATCC BAA-2266 / KCTC 15142 / 195) (Dehalococcoides ethenogenes (strain 195)) protein is Small ribosomal subunit protein uS2.